Here is a 103-residue protein sequence, read N- to C-terminus: MQNQRIRIRLKAFDHRLIDQSTAEIVETAKRTGAQVRGPIPLPTRKERFTILISPHVNKDARDQYEIRTHKRLVDIVEPTEKTVDALMRLDLAAGVDVQISLG.

This sequence belongs to the universal ribosomal protein uS10 family. In terms of assembly, part of the 30S ribosomal subunit.

Functionally, involved in the binding of tRNA to the ribosomes. The polypeptide is Small ribosomal subunit protein uS10 (Pectobacterium atrosepticum (strain SCRI 1043 / ATCC BAA-672) (Erwinia carotovora subsp. atroseptica)).